The following is a 55-amino-acid chain: uncharacterized protein (55 aa).

An N-terminal signal peptide occupies residues M1–F25.

This is an uncharacterized protein from Bacillus subtilis (strain 168).